The following is a 406-amino-acid chain: Endoplasmic reticulum resident protein 44 (406 aa).

The signal sequence occupies residues 1 to 29 (MIPGIFLSLPDLRCSLLLLVTWVFTPVTA). In terms of domain architecture, Thioredoxin spans 30 to 138 (EIISLDTENI…VKALADYIRQ (109 aa)). Intrachain disulfides connect C189/C241 and C301/C318. The tract at residues 236–285 (WIQDKCVPLVREITFENGEELTEEGLPFLILFHMKEDTESLEIFQNEVAR) is interaction with ITPR1. The segment at 360–387 (FHHGPDPTDTAPGEEVQDVASSPPESSF) is disordered. Polar residues predominate over residues 378 to 387 (VASSPPESSF). The Prevents secretion from ER signature appears at 403–406 (RDEL).

Forms mixed disulfides with both ERO1A and ERO1B and cargo folding intermediates; the interactions with ERO1A and ERO1B result in their retention in the endoplasmic reticulum. Directly interacts with ITPR1 in a pH-, redox state- and calcium-dependent manner, but not with ITPR2 or ITPR3. The strength of this interaction inversely correlates with calcium concentration.

It localises to the endoplasmic reticulum lumen. Functionally, mediates thiol-dependent retention in the early secretory pathway, forming mixed disulfides with substrate proteins through its conserved CRFS motif. Inhibits the calcium channel activity of ITPR1. May have a role in the control of oxidative protein folding in the endoplasmic reticulum. Required to retain ERO1A and ERO1B in the endoplasmic reticulum. This chain is Endoplasmic reticulum resident protein 44 (ERP44), found in Bos taurus (Bovine).